A 323-amino-acid chain; its full sequence is Prostaglandin-E(2) 9-reductase (323 aa).

NADP(+)-binding positions include 23 to 24 (TY) and Asp50. Tyr24 contacts substrate. Residue Tyr55 is the Proton donor of the active site. A substrate-binding site is contributed by His117. Residues 166 to 167 (SN), Gln190, 216 to 221 (YSALGS), and 270 to 280 (KSFTEKRIKEN) contribute to the NADP(+) site.

This sequence belongs to the aldo/keto reductase family.

It is found in the cytoplasm. It catalyses the reaction prostaglandin F2alpha + NADP(+) = prostaglandin E2 + NADPH + H(+). The catalysed reaction is (17R,20S)-17,20-dihydroxypregn-4-en-3-one + NADP(+) = 17alpha-hydroxyprogesterone + NADPH + H(+). It carries out the reaction (17R,20S)-17,20-dihydroxypregn-4-en-3-one + NAD(+) = 17alpha-hydroxyprogesterone + NADH + H(+). In terms of biological role, can convert prostaglandin E2 to prostaglandin F2-alpha. The chain is Prostaglandin-E(2) 9-reductase (AKR1C5) from Oryctolagus cuniculus (Rabbit).